The following is a 49-amino-acid chain: MAQSSSAPLQALNVRVYPIFTVRWLAVHVLGVPTVFFLGAITAMQLIRR.

The helical transmembrane segment at 24–40 (WLAVHVLGVPTVFFLGA) threads the bilayer. His-28 contributes to the heme binding site.

It belongs to the PsbE/PsbF family. As to quaternary structure, heterodimer of an alpha subunit and a beta subunit. PSII is composed of 1 copy each of membrane proteins PsbA, PsbB, PsbC, PsbD, PsbE, PsbF, PsbH, PsbI, PsbJ, PsbK, PsbL, PsbM, PsbT, PsbX, PsbY, Psb30/Ycf12, peripheral proteins PsbO, CyanoQ (PsbQ), PsbU, PsbV and a large number of cofactors. It forms dimeric complexes. Heme b serves as cofactor.

It is found in the cellular thylakoid membrane. Functionally, this b-type cytochrome is tightly associated with the reaction center of photosystem II (PSII). PSII is a light-driven water:plastoquinone oxidoreductase that uses light energy to abstract electrons from H(2)O, generating O(2) and a proton gradient subsequently used for ATP formation. It consists of a core antenna complex that captures photons, and an electron transfer chain that converts photonic excitation into a charge separation. The sequence is that of Cytochrome b559 subunit beta from Prochlorococcus marinus (strain MIT 9303).